Consider the following 474-residue polypeptide: uncharacterized protein (474 aa).

Over residues 1–14 (MGSRYPSHQLSNGL) the composition is skewed to polar residues. The tract at residues 1–137 (MGSRYPSHQL…QSGGVTRQNS (137 aa)) is disordered. Ser45 bears the Phosphoserine mark. Polar residues-rich tracts occupy residues 73-83 (RSGSFAGTAQS), 97-113 (SLAS…NSGP), and 125-137 (SGPQ…RQNS). Ser169 is subject to Phosphoserine. The next 2 helical transmembrane spans lie at 210–230 (VLWL…FILG) and 236–256 (ILLV…IWNI).

The protein localises to the membrane. This is an uncharacterized protein from Arabidopsis thaliana (Mouse-ear cress).